The chain runs to 318 residues: UAP56-interacting factor (318 aa).

Met1 is modified (N-acetylmethionine). Residues 1–27 are disordered; that stretch reads MNRFSTRLMGATATPPPAPPKARSNEN. Thr14 is subject to Phosphothreonine. Ser24 is subject to Phosphoserine. A UAP56-binding motif motif is present at residues 27–45; sequence NLDKIDMSLDDIIKLNRKE. Ser61 and Ser118 each carry phosphoserine. Lys140 is covalently cross-linked (Glycyl lysine isopeptide (Lys-Gly) (interchain with G-Cter in SUMO1)). Residues 163–180 are compositionally biased toward polar residues; it reads LNRKNNIPNNFTRSGNKL. The disordered stretch occupies residues 163–183; the sequence is LNRKNNIPNNFTRSGNKLSHQ. Residue Lys261 forms a Glycyl lysine isopeptide (Lys-Gly) (interchain with G-Cter in SUMO2) linkage.

Belongs to the UIF family. As to quaternary structure, interacts with DDX39B/UAP56 and NXF1; interaction with DDX39B/UAP56 and NXF1 are mutually exclusive. Interacts with SSRP1; required for its recruitment to mRNAs. Interacts with CHTOP.

Its subcellular location is the nucleus. It is found in the nucleoplasm. It localises to the nucleus speckle. Functionally, required for mRNA export from the nucleus to the cytoplasm. Acts as an adapter that uses the DDX39B/UAP56-NFX1 pathway to ensure efficient mRNA export and delivering to the nuclear pore. Associates with spliced and unspliced mRNAs simultaneously with ALYREF/THOC4. This chain is UAP56-interacting factor (FYTTD1), found in Bos taurus (Bovine).